The chain runs to 157 residues: 2-C-methyl-D-erythritol 2,4-cyclodiphosphate synthase (157 aa).

The a divalent metal cation site is built by Asp-8 and His-10. Residues 8–10 and 34–35 each bind 4-CDP-2-C-methyl-D-erythritol 2-phosphate; these read DVH and HS. His-42 is an a divalent metal cation binding site. Residues 56 to 58, 61 to 65, 100 to 106, 132 to 135, Phe-139, and Arg-142 contribute to the 4-CDP-2-C-methyl-D-erythritol 2-phosphate site; these read DIG, FPDTD, AQAPKMA, and TTTE.

The protein belongs to the IspF family. As to quaternary structure, homotrimer. A divalent metal cation is required as a cofactor.

It carries out the reaction 4-CDP-2-C-methyl-D-erythritol 2-phosphate = 2-C-methyl-D-erythritol 2,4-cyclic diphosphate + CMP. It functions in the pathway isoprenoid biosynthesis; isopentenyl diphosphate biosynthesis via DXP pathway; isopentenyl diphosphate from 1-deoxy-D-xylulose 5-phosphate: step 4/6. Functionally, involved in the biosynthesis of isopentenyl diphosphate (IPP) and dimethylallyl diphosphate (DMAPP), two major building blocks of isoprenoid compounds. Catalyzes the conversion of 4-diphosphocytidyl-2-C-methyl-D-erythritol 2-phosphate (CDP-ME2P) to 2-C-methyl-D-erythritol 2,4-cyclodiphosphate (ME-CPP) with a corresponding release of cytidine 5-monophosphate (CMP). This Pseudomonas fluorescens (strain Pf0-1) protein is 2-C-methyl-D-erythritol 2,4-cyclodiphosphate synthase.